Reading from the N-terminus, the 294-residue chain is Glyceraldehyde-3-phosphate dehydrogenase (294 aa).

Residues Asp19, Lys63, and Thr105 each contribute to the NAD(+) site. Residues 134–136, Thr165, 194–195, and Arg217 contribute to the D-glyceraldehyde 3-phosphate site; these read SCT and TG. Cys135 functions as the Nucleophile in the catalytic mechanism.

This sequence belongs to the glyceraldehyde-3-phosphate dehydrogenase family. Homotetramer.

The protein resides in the cytoplasm. The enzyme catalyses D-glyceraldehyde 3-phosphate + phosphate + NAD(+) = (2R)-3-phospho-glyceroyl phosphate + NADH + H(+). It participates in carbohydrate degradation; glycolysis; pyruvate from D-glyceraldehyde 3-phosphate: step 1/5. Functionally, catalyzes the oxidative phosphorylation of glyceraldehyde 3-phosphate (G3P) to 1,3-bisphosphoglycerate (BPG) using the cofactor NAD. The first reaction step involves the formation of a hemiacetal intermediate between G3P and a cysteine residue, and this hemiacetal intermediate is then oxidized to a thioester, with concomitant reduction of NAD to NADH. The reduced NADH is then exchanged with the second NAD, and the thioester is attacked by a nucleophilic inorganic phosphate to produce BPG. In Serratia odorifera, this protein is Glyceraldehyde-3-phosphate dehydrogenase (gap).